The following is a 189-amino-acid chain: ATP synthase subunit b (189 aa).

A helical transmembrane segment spans residues 35–54; that stretch reads LLAQMFNFLVLLILLRAVAY.

The protein belongs to the ATPase B chain family. As to quaternary structure, F-type ATPases have 2 components, F(1) - the catalytic core - and F(0) - the membrane proton channel. F(1) has five subunits: alpha(3), beta(3), gamma(1), delta(1), epsilon(1). F(0) has three main subunits: a(1), b(2) and c(10-14). The alpha and beta chains form an alternating ring which encloses part of the gamma chain. F(1) is attached to F(0) by a central stalk formed by the gamma and epsilon chains, while a peripheral stalk is formed by the delta and b chains.

It localises to the cell membrane. F(1)F(0) ATP synthase produces ATP from ADP in the presence of a proton or sodium gradient. F-type ATPases consist of two structural domains, F(1) containing the extramembraneous catalytic core and F(0) containing the membrane proton channel, linked together by a central stalk and a peripheral stalk. During catalysis, ATP synthesis in the catalytic domain of F(1) is coupled via a rotary mechanism of the central stalk subunits to proton translocation. In terms of biological role, component of the F(0) channel, it forms part of the peripheral stalk, linking F(1) to F(0). In Desulforamulus reducens (strain ATCC BAA-1160 / DSM 100696 / MI-1) (Desulfotomaculum reducens), this protein is ATP synthase subunit b.